The sequence spans 217 residues: Probable GTP-binding protein EngB (217 aa).

Residues 29–213 (GPPEVAFAGR…RQAIAETVGI (185 aa)) enclose the EngB-type G domain. Residues 37-44 (GRSNVGKS), 64-68 (GRTQE), 91-94 (DMPG), 158-161 (TKTD), and 192-194 (TSS) contribute to the GTP site. Residues S44 and T66 each contribute to the Mg(2+) site.

The protein belongs to the TRAFAC class TrmE-Era-EngA-EngB-Septin-like GTPase superfamily. EngB GTPase family. Mg(2+) is required as a cofactor.

Necessary for normal cell division and for the maintenance of normal septation. The protein is Probable GTP-binding protein EngB of Rhizobium etli (strain ATCC 51251 / DSM 11541 / JCM 21823 / NBRC 15573 / CFN 42).